Here is a 237-residue protein sequence, read N- to C-terminus: Uridylate kinase (237 aa).

Residue Lys-9 to Gly-12 participates in ATP binding. Gly-51 serves as a coordination point for UMP. 2 residues coordinate ATP: Gly-52 and Arg-56. UMP is bound by residues Asp-71 and Cys-132 to Thr-139. 3 residues coordinate ATP: Thr-159, Tyr-165, and Asp-168.

The protein belongs to the UMP kinase family. As to quaternary structure, homohexamer.

It localises to the cytoplasm. It carries out the reaction UMP + ATP = UDP + ADP. The protein operates within pyrimidine metabolism; CTP biosynthesis via de novo pathway; UDP from UMP (UMPK route): step 1/1. Its activity is regulated as follows. Inhibited by UTP. Its function is as follows. Catalyzes the reversible phosphorylation of UMP to UDP. This is Uridylate kinase from Prochlorococcus marinus (strain MIT 9313).